Reading from the N-terminus, the 471-residue chain is Microtubule-associated tyrosine carboxypeptidase 1 (471 aa).

Disordered stretches follow at residues 1-40 (MVLD…PLYP) and 76-116 (HMRR…LRPA). His-280 is a Zn(2+) binding site. Glu-281 functions as the Nucleophile in the catalytic mechanism. Zn(2+) is bound by residues His-285 and Glu-316.

This sequence belongs to the peptidase MATCAP family. Zn(2+) serves as cofactor.

It is found in the cytoplasm. The protein resides in the cytoskeleton. The catalysed reaction is C-terminal L-alpha-aminoacyl-L-glutamyl-L-glutamyl-L-tyrosyl-[tubulin] + H2O = C-terminal L-alpha-aminoacyl-L-glutamyl-L-glutamyl-[tubulin] + L-tyrosine. The enzyme catalyses C-terminal L-alpha-aminoacyl-L-glutamyl-L-glutamyl-L-phenylalanyl-[tubulin] + H2O = C-terminal L-alpha-aminoacyl-L-glutamyl-L-glutamyl-[tubulin] + L-phenylalanine. Functionally, tyrosine carboxypeptidase that removes the C-terminal tyrosine residue of alpha-tubulin, thereby regulating microtubule dynamics and function. Also able to remove the C-terminal phenylalanine residue of alpha-tubulin TUBA8. Recognizes adjacent tubulin dimers along the same protofilament. The chain is Microtubule-associated tyrosine carboxypeptidase 1 from Homo sapiens (Human).